The chain runs to 59 residues: Putative conotoxin (59 aa).

A signal peptide spans 1 to 25 (MGMRMMFTVFLLVVLATTVVPITLA). Residues 26–47 (SATDGRNAAANARVSPVISKSS) constitute a propeptide that is removed on maturation.

The protein belongs to the conotoxin A superfamily. In terms of tissue distribution, expressed by the venom duct.

The protein resides in the secreted. Functionally, acts as a neurotoxin. This chain is Putative conotoxin, found in Conus imperialis (Imperial cone).